A 103-amino-acid polypeptide reads, in one-letter code: Large ribosomal subunit protein bL21 (103 aa).

The protein belongs to the bacterial ribosomal protein bL21 family. As to quaternary structure, part of the 50S ribosomal subunit. Contacts protein L20.

Its function is as follows. This protein binds to 23S rRNA in the presence of protein L20. The sequence is that of Large ribosomal subunit protein bL21 from Beijerinckia indica subsp. indica (strain ATCC 9039 / DSM 1715 / NCIMB 8712).